The sequence spans 485 residues: Bcl-2-like protein 13 (485 aa).

A BH4 motif is present at residues 14–30; it reads ETKYVVLSYLGLLSQEK. Ser38 bears the Phosphoserine mark. The BH3 signature appears at 100-116; the sequence is MEDCLAHLGEKVSQELK. Residues 147–157 carry the BH1 motif; that stretch reads ASGWNKILVPL. The BH2 motif lies at 193-206; sequence YIIQQGGWGTVFSL. The interval 218–248 is disordered; the sequence is AEDSNDIYILPSDNSGQVSPPESPTVTTSWQ. Polar residues predominate over residues 229–248; it reads SDNSGQVSPPESPTVTTSWQ. An A repeat occupies 246-256; sequence SWQSESLPVSL. Phosphoserine occurs at positions 259, 261, 303, 326, 371, 375, 410, 420, 426, 429, and 444. One copy of the A; approximate repeat lies at 261 to 271; it reads SWHTESLPVSL. The segment at 418-451 is disordered; the sequence is EESLVEELSPASEKKPVPPSEGKSRLSPAGEMKP. The stretch at 425–441 is one B repeat; sequence LSPASEKKPVPPSEGKS. Residues 443-459 form a B; approximate repeat; it reads LSPAGEMKPMPLSEGKS. The helical transmembrane segment at 460 to 480 threads the bilayer; the sequence is ILLFGGAAAVAILAVAIGVAL.

Belongs to the Bcl-2 family. As to quaternary structure, monomer. Ubiquitous, with the highest levels of expression in heart, placenta and pancreas.

Its subcellular location is the mitochondrion membrane. The protein resides in the nucleus. May promote the activation of caspase-3 and apoptosis. This chain is Bcl-2-like protein 13 (BCL2L13), found in Homo sapiens (Human).